Here is a 327-residue protein sequence, read N- to C-terminus: Inactive peptidyl-prolyl cis-trans isomerase FKBP6 (327 aa).

Residues 54–143 enclose the PPIase FKBP-type domain; sequence DASVLVKYSG…LFEIELIDFL (90 aa). 3 TPR repeats span residues 171-204, 219-252, and 253-286; these read AATE…LHRR, LLVL…DKRN, and AKAL…QPCN.

The protein belongs to the FKBP6 family. In terms of assembly, interacts with HSP72/HSPA2 and CLTC. Interacts with GAPDH; leading to inhibit GAPDH catalytic activity. Interacts (via TPR repeats) with HSP90. Testis-specific.

It localises to the cytoplasm. It is found in the cytosol. The protein localises to the nucleus. Its subcellular location is the chromosome. Co-chaperone required during spermatogenesis to repress transposable elements and prevent their mobilization, which is essential for the germline integrity. Acts via the piRNA metabolic process, which mediates the repression of transposable elements during meiosis by forming complexes composed of piRNAs and Piwi proteins and govern the methylation and subsequent repression of transposons. Acts as a co-chaperone via its interaction with HSP90 and is required for the piRNA amplification process, the secondary piRNA biogenesis. May be required together with HSP90 in removal of 16 nucleotide ping-pong by-products from Piwi complexes, possibly facilitating turnover of Piwi complexes. This is Inactive peptidyl-prolyl cis-trans isomerase FKBP6 (Fkbp6) from Mus musculus (Mouse).